We begin with the raw amino-acid sequence, 149 residues long: Large ribosomal subunit protein uL15 (149 aa).

The segment at 1–57 (MRLNDPKPKTGSQHRRRRVGRGIAAGQGASCGFGMRGQKSRSGRPTRPGFEGGQNPL) is disordered. The segment covering 23-35 (IAAGQGASCGFGM) has biased composition (gly residues).

This sequence belongs to the universal ribosomal protein uL15 family. Part of the 50S ribosomal subunit.

Its function is as follows. Binds to the 23S rRNA. This chain is Large ribosomal subunit protein uL15, found in Acaryochloris marina (strain MBIC 11017).